The chain runs to 385 residues: 1-deoxy-D-xylulose 5-phosphate reductoisomerase (385 aa).

NADPH is bound by residues threonine 10, glycine 11, serine 12, isoleucine 13, glycine 36, asparagine 38, and asparagine 121. Lysine 122 lines the 1-deoxy-D-xylulose 5-phosphate pocket. Residue glutamate 123 participates in NADPH binding. A Mn(2+)-binding site is contributed by aspartate 147. 1-deoxy-D-xylulose 5-phosphate is bound by residues serine 148, glutamate 149, serine 173, and histidine 196. Glutamate 149 is a binding site for Mn(2+). Position 202 (glycine 202) interacts with NADPH. Residues serine 209, asparagine 214, lysine 215, and glutamate 218 each coordinate 1-deoxy-D-xylulose 5-phosphate. Glutamate 218 is a Mn(2+) binding site.

It belongs to the DXR family. It depends on Mg(2+) as a cofactor. Mn(2+) serves as cofactor.

It carries out the reaction 2-C-methyl-D-erythritol 4-phosphate + NADP(+) = 1-deoxy-D-xylulose 5-phosphate + NADPH + H(+). It participates in isoprenoid biosynthesis; isopentenyl diphosphate biosynthesis via DXP pathway; isopentenyl diphosphate from 1-deoxy-D-xylulose 5-phosphate: step 1/6. Its function is as follows. Catalyzes the NADPH-dependent rearrangement and reduction of 1-deoxy-D-xylulose-5-phosphate (DXP) to 2-C-methyl-D-erythritol 4-phosphate (MEP). The chain is 1-deoxy-D-xylulose 5-phosphate reductoisomerase from Exiguobacterium sp. (strain ATCC BAA-1283 / AT1b).